We begin with the raw amino-acid sequence, 623 residues long: Phosphoenolpyruvate carboxykinase [GTP] (623 aa).

Residues Arg86 and 220-222 (YGG) contribute to the substrate site. Mn(2+) contacts are provided by Lys229 and His248. Ser270 contacts substrate. GTP is bound at residue 271–276 (MCGKTS). Cys272 is a catalytic residue. Asp289 contacts Mn(2+). Substrate is bound at residue 384–386 (NAR). GTP-binding residues include Arg386 and Arg418.

This sequence belongs to the phosphoenolpyruvate carboxykinase [GTP] family. Homotetramer. Mn(2+) serves as cofactor.

Its subcellular location is the cytoplasm. It carries out the reaction oxaloacetate + GTP = phosphoenolpyruvate + GDP + CO2. It functions in the pathway carbohydrate biosynthesis; gluconeogenesis. Functionally, involved in the gluconeogenesis. Catalyzes the conversion of oxaloacetate (OAA) to phosphoenolpyruvate (PEP), the rate-limiting step in the metabolic pathway that produces glucose from lactate and other precursors derived from the citric acid cycle. This Thermococcus kodakarensis (strain ATCC BAA-918 / JCM 12380 / KOD1) (Pyrococcus kodakaraensis (strain KOD1)) protein is Phosphoenolpyruvate carboxykinase [GTP] (pckG).